Here is a 257-residue protein sequence, read N- to C-terminus: Imidazole glycerol phosphate synthase subunit HisF (257 aa).

Catalysis depends on residues Asp-11 and Asp-130.

The protein belongs to the HisA/HisF family. In terms of assembly, heterodimer of HisH and HisF.

It localises to the cytoplasm. The catalysed reaction is 5-[(5-phospho-1-deoxy-D-ribulos-1-ylimino)methylamino]-1-(5-phospho-beta-D-ribosyl)imidazole-4-carboxamide + L-glutamine = D-erythro-1-(imidazol-4-yl)glycerol 3-phosphate + 5-amino-1-(5-phospho-beta-D-ribosyl)imidazole-4-carboxamide + L-glutamate + H(+). Its pathway is amino-acid biosynthesis; L-histidine biosynthesis; L-histidine from 5-phospho-alpha-D-ribose 1-diphosphate: step 5/9. In terms of biological role, IGPS catalyzes the conversion of PRFAR and glutamine to IGP, AICAR and glutamate. The HisF subunit catalyzes the cyclization activity that produces IGP and AICAR from PRFAR using the ammonia provided by the HisH subunit. This is Imidazole glycerol phosphate synthase subunit HisF from Aliivibrio fischeri (strain ATCC 700601 / ES114) (Vibrio fischeri).